A 223-amino-acid chain; its full sequence is Sigma non-opioid intracellular receptor 1 (223 aa).

Topologically, residues 1–9 (MQWAAGRRW) are lumenal. The tract at residues 2-8 (QWAAGRR) is targeting to endoplasmic reticulum-associated lipid droplets. A helical membrane pass occupies residues 10–30 (AWITLFLTIVAVLIQAVWLWL). Over 31–223 (GTQSFVFQRE…LTTYLFGQDS (193 aa)) the chain is Cytoplasmic. The important for ligand-binding stretch occupies residues 99–106 (SLSEYVLL). Positions 177–223 (VIPSTLAFALSDTIFSTQDFLTLFYTLRAYARGLRLELTTYLFGQDS) are C-terminal hydrophobic region.

It belongs to the ERG2 family. In terms of assembly, homotrimer. Forms a ternary complex with ANK2 and ITPR3. The complex is disrupted by agonists. Interacts with KCNA4. Interacts with KCNA2; cocaine consumption leads to increased interaction. Interacts with RNF112 in an oxidative stress-regulated manner.

Its subcellular location is the nucleus inner membrane. The protein localises to the nucleus outer membrane. The protein resides in the nucleus envelope. It localises to the cytoplasmic vesicle. It is found in the endoplasmic reticulum membrane. Its subcellular location is the membrane. The protein localises to the lipid droplet. The protein resides in the cell junction. It localises to the cell membrane. It is found in the cell projection. Its subcellular location is the growth cone. The protein localises to the postsynaptic density membrane. Functions in lipid transport from the endoplasmic reticulum and is involved in a wide array of cellular functions probably through regulation of the biogenesis of lipid microdomains at the plasma membrane. Involved in the regulation of different receptors it plays a role in BDNF signaling and EGF signaling. Also regulates ion channels like the potassium channel and could modulate neurotransmitter release. Plays a role in calcium signaling through modulation together with ANK2 of the ITP3R-dependent calcium efflux at the endoplasmic reticulum. Plays a role in several other cell functions including proliferation, survival and death. Originally identified for its ability to bind various psychoactive drugs it is involved in learning processes, memory and mood alteration. Necessary for proper mitochondrial axonal transport in motor neurons, in particular the retrograde movement of mitochondria. Plays a role in protecting cells against oxidative stress-induced cell death via its interaction with RNF112. This is Sigma non-opioid intracellular receptor 1 (SIGMAR1) from Trichosurus vulpecula (Brush-tailed possum).